The primary structure comprises 303 residues: Probable 5-dehydro-4-deoxyglucarate dehydratase (303 aa).

This sequence belongs to the DapA family.

It carries out the reaction 5-dehydro-4-deoxy-D-glucarate + H(+) = 2,5-dioxopentanoate + CO2 + H2O. It functions in the pathway carbohydrate acid metabolism; D-glucarate degradation; 2,5-dioxopentanoate from D-glucarate: step 2/2. The sequence is that of Probable 5-dehydro-4-deoxyglucarate dehydratase from Acinetobacter baumannii (strain AB307-0294).